Here is a 151-residue protein sequence, read N- to C-terminus: Histone H2A.2.1 (151 aa).

At methionine 1 the chain carries N-acetylmethionine. 2 disordered regions span residues 1–22 (MDGSKAKKVAAKKFGGPRKKSV) and 129–151 (EKAEKAGAAPKSPKKTTKSPKKA). 2 consecutive short sequence motifs (SPKK motif) follow at residues 140–143 (SPKK) and 147–150 (SPKK). The span at 140–151 (SPKKTTKSPKKA) shows a compositional bias: basic residues.

Belongs to the histone H2A family. As to quaternary structure, the nucleosome is a histone octamer containing two molecules each of H2A, H2B, H3 and H4 assembled in one H3-H4 heterotetramer and two H2A-H2B heterodimers. The octamer wraps approximately 147 bp of DNA. Phosphorylated within its C-terminal part, probably at the SPKK motifs.

It localises to the nucleus. The protein localises to the chromosome. In terms of biological role, core component of nucleosome. Nucleosomes wrap and compact DNA into chromatin, limiting DNA accessibility to the cellular machineries which require DNA as a template. Histones thereby play a central role in transcription regulation, DNA repair, DNA replication and chromosomal stability. DNA accessibility is regulated via a complex set of post-translational modifications of histones, also called histone code, and nucleosome remodeling. This chain is Histone H2A.2.1, found in Triticum aestivum (Wheat).